A 226-amino-acid chain; its full sequence is Cytidylate kinase (226 aa).

Residue 10–18 coordinates ATP; that stretch reads GPASSGKST.

The protein belongs to the cytidylate kinase family. Type 1 subfamily.

The protein localises to the cytoplasm. The catalysed reaction is CMP + ATP = CDP + ADP. It carries out the reaction dCMP + ATP = dCDP + ADP. This is Cytidylate kinase from Streptococcus pyogenes serotype M4 (strain MGAS10750).